Reading from the N-terminus, the 159-residue chain is MKLLSKIMIIALAASMLQACNGPGGMNKQGTGTLLGGAGGALLGSQFGKGKGQLVGVGVGALLGAVLGGQIGAGMDEQDRRLAELTSQRALEATPSGTSVEWRNPDNGNHGYVTPNKTYRNSTGQYCREYTQTVVIGGKQQKAYGNACRQPDGLWQVVN.

The first 19 residues, 1 to 19, serve as a signal peptide directing secretion; sequence MKLLSKIMIIALAASMLQA. Cys-20 is lipidated: N-palmitoyl cysteine. Residue Cys-20 is the site of S-diacylglycerol cysteine attachment.

This sequence belongs to the rickettsiale 17 kDa surface antigen family.

It is found in the cell outer membrane. This is 17 kDa surface antigen (omp) from Rickettsia felis (strain ATCC VR-1525 / URRWXCal2) (Rickettsia azadi).